The sequence spans 635 residues: Probable clathrin assembly protein At4g32285 (635 aa).

In terms of domain architecture, ENTH spans 23-159; that stretch reads VASNMAPDLE…ELALFERRGR (137 aa). Residues 157–208 are disordered; that stretch reads RGRNGGGSSSSHQSNGDDGYNRSRDDFRSPPPRTYDYETGNGFGMPKRSRSF. The segment covering 165–174 has biased composition (low complexity); the sequence is SSSHQSNGDD. Positions 175–184 are enriched in basic and acidic residues; the sequence is GYNRSRDDFR. Position 207 is a phosphoserine (serine 207). Threonine 224 is subject to Phosphothreonine. Positions 357 to 369 are enriched in basic and acidic residues; the sequence is AKRAKSPERKEIE. Residues 357–412 are disordered; it reads AKRAKSPERKEIEAPPAPAPPVEEPVDMNEIKALPPPENHTPPPPPAPEPKPQQPQ. A compositionally biased stretch (pro residues) spans 390–409; that stretch reads LPPPENHTPPPPPAPEPKPQ.

The protein resides in the membrane. It is found in the clathrin-coated pit. The protein localises to the golgi apparatus. Its subcellular location is the cytoplasmic vesicle. It localises to the clathrin-coated vesicle. This is Probable clathrin assembly protein At4g32285 from Arabidopsis thaliana (Mouse-ear cress).